Reading from the N-terminus, the 477-residue chain is UDP-N-acetylmuramate--L-alanine ligase (477 aa).

122-128 is an ATP binding site; that stretch reads GTHGKTT.

The protein belongs to the MurCDEF family.

The protein resides in the cytoplasm. It catalyses the reaction UDP-N-acetyl-alpha-D-muramate + L-alanine + ATP = UDP-N-acetyl-alpha-D-muramoyl-L-alanine + ADP + phosphate + H(+). It functions in the pathway cell wall biogenesis; peptidoglycan biosynthesis. In terms of biological role, cell wall formation. The sequence is that of UDP-N-acetylmuramate--L-alanine ligase from Xanthomonas euvesicatoria pv. vesicatoria (strain 85-10) (Xanthomonas campestris pv. vesicatoria).